The primary structure comprises 531 residues: Keratin, type II cytoskeletal 79 (531 aa).

Residues 1–12 (MRSSLSRQTFST) are compositionally biased toward polar residues. Positions 1–55 (MRSSLSRQTFSTKGGFSSNSASGGGGSRMRTSYSSVTMSRGSGGGGGVRSGSSSG) are disordered. The segment at 1 to 138 (MRSSLSRQTF…DPEIQRVRTQ (138 aa)) is head. The span at 28–40 (RMRTSYSSVTMSR) shows a compositional bias: low complexity. A compositionally biased stretch (gly residues) spans 41 to 55 (GSGGGGGVRSGSSSG). Positions 139-174 (EREQIKTLNNKFASFIDKVRFLEQQNKVLETKWALL) are coil 1A. Residues 139–453 (EREQIKTLNN…KLLESEESRM (315 aa)) enclose the IF rod domain. The tract at residues 175–194 (QEQSQNTGVARSLEPFFENY) is linker 1. The coil 1B stretch occupies residues 195–286 (LSTLRRQLDT…QLFEMELSQV (92 aa)). The tract at residues 287-310 (QTNVSDTNVILSMDNNRNLDLDSI) is linker 12. Residues 311-449 (IAEVKAQYEL…ATYRKLLESE (139 aa)) form a coil 2 region. A tail region spans residues 450 to 531 (ESRMSGDCPS…TTVKTSSRRY (82 aa)).

The protein belongs to the intermediate filament family. As to quaternary structure, heterotetramer of two type I and two type II keratins.

The chain is Keratin, type II cytoskeletal 79 (Krt79) from Mus musculus (Mouse).